Consider the following 227-residue polypeptide: Endo-1,4-beta-xylanase 1 (227 aa).

The N-terminal stretch at 1-19 (MVSLKSVLAAATAVSSAIA) is a signal peptide. The 189-residue stretch at 37–225 (QVTPNAEGWH…SSGESDIYVQ (189 aa)) folds into the GH11 domain. The Nucleophile role is filled by Glu121. Glu212 (proton donor) is an active-site residue.

This sequence belongs to the glycosyl hydrolase 11 (cellulase G) family.

It carries out the reaction Endohydrolysis of (1-&gt;4)-beta-D-xylosidic linkages in xylans.. It functions in the pathway glycan degradation; xylan degradation. In Humicola insolens (Soft-rot fungus), this protein is Endo-1,4-beta-xylanase 1.